The chain runs to 224 residues: Cytidylate kinase (224 aa).

An ATP-binding site is contributed by 11–19 (GPAAAGKST).

Belongs to the cytidylate kinase family. Type 1 subfamily.

It localises to the cytoplasm. The enzyme catalyses CMP + ATP = CDP + ADP. It carries out the reaction dCMP + ATP = dCDP + ADP. In Listeria monocytogenes serotype 4a (strain HCC23), this protein is Cytidylate kinase.